Consider the following 292-residue polypeptide: Acetyl-coenzyme A carboxylase carboxyl transferase subunit beta (292 aa).

Positions 29–292 constitute a CoA carboxyltransferase N-terminal domain; it reads LWSKCPECGQ…HGCLQGSAAV (264 aa). 4 residues coordinate Zn(2+): C33, C36, C52, and C55. The segment at 33–55 adopts a C4-type zinc-finger fold; the sequence is CPECGQVVYRKDLLANASVCSNC.

It belongs to the AccD/PCCB family. As to quaternary structure, acetyl-CoA carboxylase is a heterohexamer composed of biotin carboxyl carrier protein (AccB), biotin carboxylase (AccC) and two subunits each of ACCase subunit alpha (AccA) and ACCase subunit beta (AccD). Zn(2+) is required as a cofactor.

The protein resides in the cytoplasm. It carries out the reaction N(6)-carboxybiotinyl-L-lysyl-[protein] + acetyl-CoA = N(6)-biotinyl-L-lysyl-[protein] + malonyl-CoA. The protein operates within lipid metabolism; malonyl-CoA biosynthesis; malonyl-CoA from acetyl-CoA: step 1/1. Functionally, component of the acetyl coenzyme A carboxylase (ACC) complex. Biotin carboxylase (BC) catalyzes the carboxylation of biotin on its carrier protein (BCCP) and then the CO(2) group is transferred by the transcarboxylase to acetyl-CoA to form malonyl-CoA. The protein is Acetyl-coenzyme A carboxylase carboxyl transferase subunit beta of Synechococcus sp. (strain WH7803).